Consider the following 85-residue polypeptide: Small ribosomal subunit protein bS18 (85 aa).

The protein belongs to the bacterial ribosomal protein bS18 family. In terms of assembly, part of the 30S ribosomal subunit. Forms a tight heterodimer with protein bS6.

In terms of biological role, binds as a heterodimer with protein bS6 to the central domain of the 16S rRNA, where it helps stabilize the platform of the 30S subunit. The protein is Small ribosomal subunit protein bS18 of Hamiltonella defensa subsp. Acyrthosiphon pisum (strain 5AT).